The following is a 337-amino-acid chain: ATP-dependent 6-phosphofructokinase (337 aa).

G11 contributes to the ATP binding site. 21 to 25 (RAVVR) serves as a coordination point for ADP. ATP contacts are provided by residues 72 to 73 (RY) and 102 to 105 (GDGS). D103 lines the Mg(2+) pocket. 125 to 127 (TID) lines the substrate pocket. D127 acts as the Proton acceptor in catalysis. R154 lines the ADP pocket. Substrate is bound by residues R162 and 169 to 171 (MGR). ADP is bound by residues 185-187 (GAD), K212, and 214-216 (KNH). Substrate is bound by residues E223, R245, and 251-254 (HILR).

The protein belongs to the phosphofructokinase type A (PFKA) family. ATP-dependent PFK group I subfamily. Prokaryotic clade 'B1' sub-subfamily. Homotetramer. Requires Mg(2+) as cofactor.

It is found in the cytoplasm. The catalysed reaction is beta-D-fructose 6-phosphate + ATP = beta-D-fructose 1,6-bisphosphate + ADP + H(+). Its pathway is carbohydrate degradation; glycolysis; D-glyceraldehyde 3-phosphate and glycerone phosphate from D-glucose: step 3/4. With respect to regulation, allosterically activated by ADP and other diphosphonucleosides, and allosterically inhibited by phosphoenolpyruvate. In terms of biological role, catalyzes the phosphorylation of D-fructose 6-phosphate to fructose 1,6-bisphosphate by ATP, the first committing step of glycolysis. This chain is ATP-dependent 6-phosphofructokinase, found in Streptococcus pyogenes serotype M3 (strain SSI-1).